A 344-amino-acid polypeptide reads, in one-letter code: L-rhamnose-proton symporter (344 aa).

Helical transmembrane passes span 4-24 (AITM…CFYA), 38-58 (WSVG…ALLL), 68-88 (FNLS…IGNI), 101-121 (MGIG…TPII), 137-157 (TLLG…AGQL), 175-195 (LLLA…MNAA), 214-234 (LPSY…FCFI), 259-279 (ILLS…YAWG), 290-310 (MSWM…GLVL), and 321-341 (VAVL…VGLG).

It belongs to the L-rhamnose transporter (TC 2.A.7.6) family.

Its subcellular location is the cell inner membrane. The enzyme catalyses L-rhamnopyranose(in) + H(+)(in) = L-rhamnopyranose(out) + H(+)(out). Uptake of L-rhamnose across the cytoplasmic membrane with the concomitant transport of protons into the cell (symport system). This is L-rhamnose-proton symporter from Salmonella gallinarum (strain 287/91 / NCTC 13346).